Consider the following 549-residue polypeptide: MTTASIRRGYHVIKTILHFGLDDLIPKHKKPWYFAIVRNSLFWVRNKHKTKSPAERLKLAMQDLGPVYIKLGQMLSTRRDLLDDEWAYQLAMLQDRVPPFDSALAREAIEAELGAPIATYFDDFNDTPLASASISQVHTATLKSNGKAVVLKVLRPNVEQQILADLQLMTQTANLLETLLGDGNRLRPAEVIEDYRTTILGELNLKLEALNAIKLRNNFLGSNSLYVPFVYEEHSYQRLMVMERIYGIPVSDTEALRAQGTNFKLLAERGVELFFTQVFRDNFFHADMHPGNIFISREHPDDPFYIGLDCGIMGTLTEVDKRYLAENFLAFFNRDYHRIAQLYIESGWVSEHTDIIAFEQAVKVVCEPMFNKPLDEISFGHVLLELFRTARHFDIVVQPQLVLLEKTLLYIEGLGRQLYPQLDLWQTAKPFLENWMSEQVGPKAMFNKVKSNAPFWADKLPEFPELIYDNLKLGRKLLGTQQQMLDKYLRYQQKSHKSNYLLITSAVLLICGTILFTQIVTLWPAYTCIGAGILIWAIGWRSRPKNRKF.

Residues 123-501 (DFNDTPLASA…QQKSHKSNYL (379 aa)) enclose the Protein kinase domain. ATP is bound by residues 129 to 137 (LASASISQV) and Lys152. Residue Asp287 is the Proton acceptor of the active site. A run of 2 helical transmembrane segments spans residues 498–518 (SNYL…LFTQ) and 519–539 (IVTL…WAIG).

This sequence belongs to the ABC1 family. UbiB subfamily.

The protein localises to the cell inner membrane. The protein operates within cofactor biosynthesis; ubiquinone biosynthesis [regulation]. Functionally, is probably a protein kinase regulator of UbiI activity which is involved in aerobic coenzyme Q (ubiquinone) biosynthesis. In Shewanella frigidimarina (strain NCIMB 400), this protein is Probable protein kinase UbiB.